Reading from the N-terminus, the 311-residue chain is MGFLTFLIVPLLILGISGIVYIYREVVRLMSRSALKNKVVVITDAISGLGKECSRVFHSAGARLVLCGKTWEKLEALHDALISVADPSVTFTPKLVLLDISDINNMEAMGKEIQDCYGCVDVLINNASMKMKGPLQSVSLELDKKIMDANYFGPITLVKAILPHMISRRTGQIVLVNTIQGKIGVPFRAAYAASKHAIQGFFDCLRAEVEEFDVSVSTVSPTFIRSYHVQPQPGNWEASIWKFFFRKLSYGAHPVEVAEEVLSTVSRKKQEVFMANPIPRAAVYIRTFLPELFFAVVATGVKEKHFVEEEK.

Residues 1-18 form the signal peptide; it reads MGFLTFLIVPLLILGISG. 41–65 contributes to the NAD(+) binding site; that stretch reads VITDAISGLGKECSRVFHSAGARLV. Threonine 178 is a substrate binding site. The active-site Proton acceptor is the tyrosine 191.

It belongs to the short-chain dehydrogenases/reductases (SDR) family.

The protein localises to the secreted. In terms of biological role, putative oxidoreductase. The protein is Dehydrogenase/reductase SDR family member 7C (dhrs7c) of Xenopus tropicalis (Western clawed frog).